The following is a 150-amino-acid chain: Transmembrane protein 35B (150 aa).

Positions 1-21 are cleaved as a signal peptide; the sequence is MSFRVGVLRVLLGVFFALTGA. 3 helical membrane passes run 62–82, 84–104, and 111–131; these read TAVG…PPVL, EISN…LVVL, and YVPA…HFLA.

This sequence belongs to the DoxX family.

It is found in the membrane. The sequence is that of Transmembrane protein 35B from Mus musculus (Mouse).